We begin with the raw amino-acid sequence, 334 residues long: L-lactate dehydrogenase B chain (334 aa).

Residues Gly30–Lys58 and Arg100 each bind NAD(+). Residues Arg107, Asn139, and Arg170 each coordinate substrate. NAD(+) is bound at residue Asn139. Catalysis depends on His194, which acts as the Proton acceptor. Residue Thr249 participates in substrate binding.

It belongs to the LDH/MDH superfamily. LDH family. In terms of assembly, homotetramer.

The protein localises to the cytoplasm. It catalyses the reaction (S)-lactate + NAD(+) = pyruvate + NADH + H(+). It functions in the pathway fermentation; pyruvate fermentation to lactate; (S)-lactate from pyruvate: step 1/1. In terms of biological role, interconverts simultaneously and stereospecifically pyruvate and lactate with concomitant interconversion of NADH and NAD(+). The polypeptide is L-lactate dehydrogenase B chain (ldhb) (Squalus acanthias (Spiny dogfish)).